The chain runs to 337 residues: Phenylalanine--tRNA ligase alpha subunit (337 aa).

Residue Glu-252 participates in Mg(2+) binding.

The protein belongs to the class-II aminoacyl-tRNA synthetase family. Phe-tRNA synthetase alpha subunit type 1 subfamily. In terms of assembly, tetramer of two alpha and two beta subunits. Mg(2+) is required as a cofactor.

Its subcellular location is the cytoplasm. It catalyses the reaction tRNA(Phe) + L-phenylalanine + ATP = L-phenylalanyl-tRNA(Phe) + AMP + diphosphate + H(+). This is Phenylalanine--tRNA ligase alpha subunit from Saccharophagus degradans (strain 2-40 / ATCC 43961 / DSM 17024).